The following is a 274-amino-acid chain: Ommochrome-binding protein (274 aa).

An N-terminal signal peptide occupies residues 1 to 18 (MKLLILTICALHVNQMMA). N-linked (GlcNAc...) asparagine glycosylation occurs at Asn183.

As to quaternary structure, monomer. In terms of tissue distribution, present in larval hemolymph and synthesized by the fat body.

Functionally, binds to an ommochrome, ommatin D which is a yellow chromophore. May be involved in guiding the chromophore through the hemolymph from the epidermis to the gut. In Manduca sexta (Tobacco hawkmoth), this protein is Ommochrome-binding protein.